Here is a 360-residue protein sequence, read N- to C-terminus: WAT1-related protein At3g28070 (360 aa).

Helical transmembrane passes span 15-35 (AVFL…STLF), 45-65 (IYPF…PSLF), 84-104 (IGLL…GIEY), 108-128 (TLAS…AIIF), 140-160 (SLAK…VIFY), 190-210 (WLIG…SFIL), 224-244 (VSFL…LVVE), 248-268 (PSVW…MAIV), 286-306 (LYLA…GAIF), and 311-331 (LYLG…AVMW). The region spanning 30–158 (GISTLFKFAT…LSLIGALVVI (129 aa)) is the EamA domain.

Belongs to the drug/metabolite transporter (DMT) superfamily. Plant drug/metabolite exporter (P-DME) (TC 2.A.7.4) family.

The protein localises to the membrane. The chain is WAT1-related protein At3g28070 from Arabidopsis thaliana (Mouse-ear cress).